The chain runs to 61 residues: Large ribosomal subunit protein uL30 (61 aa).

Belongs to the universal ribosomal protein uL30 family. Part of the 50S ribosomal subunit.

The sequence is that of Large ribosomal subunit protein uL30 from Bifidobacterium longum (strain DJO10A).